The sequence spans 215 residues: uncharacterized protein (215 aa).

Residues 1–17 form the signal peptide; it reads MKKVLASATILSLMLVG. A disordered region spans residues 17–110; that stretch reads GCSNGGNDES…NKQQQSVQDN (94 aa). Cysteine 18 carries the N-palmitoyl cysteine lipid modification. Cysteine 18 carries the S-diacylglycerol cysteine lipid modification. Positions 25–69 are enriched in basic and acidic residues; that stretch reads ESSHKDDSSKTEQKDKSSSQHDSKKDSKRNDTNNKQDNQENKSNK. Residues 70 to 95 are compositionally biased toward polar residues; that stretch reads EQTSNQNSNAGEQRTSERPTTNSNGI. Residues 96-110 are compositionally biased toward low complexity; it reads SSDNQNKQQQSVQDN.

It is found in the cell membrane. This is an uncharacterized protein from Staphylococcus epidermidis (strain ATCC 12228 / FDA PCI 1200).